A 407-amino-acid chain; its full sequence is Expansin-like protein 2 (407 aa).

The N-terminal stretch at 1–23 (MKMKNFLSKSLLVLLIGLIGVKS) is a signal peptide. Residues 42 to 141 (HGNCGYEQLT…KKVSCDVTGN (100 aa)) form the Expansin-like EG45 domain. Disulfide bonds link cysteine 45-cysteine 75 and cysteine 78-cysteine 136. Asparagine 70, asparagine 117, and asparagine 387 each carry an N-linked (GlcNAc...) asparagine glycan.

This sequence belongs to the expansin family. Expansin A subfamily.

The protein resides in the secreted. Unlikely to encode with a protein with expansin activity. This chain is Expansin-like protein 2 (expl2), found in Dictyostelium discoideum (Social amoeba).